Here is a 386-residue protein sequence, read N- to C-terminus: O-methyltransferase 12 (386 aa).

S-adenosyl-L-homocysteine-binding residues include Ser-207, Gly-231, Asp-254, Asp-274, and Lys-288. Asp-254 serves as a coordination point for S-adenosyl-L-methionine. The active-site Proton acceptor is the His-292.

It belongs to the class I-like SAM-binding methyltransferase superfamily. Cation-independent O-methyltransferase family. Homodimer. As to expression, expressed at high levels in all tissues.

It catalyses the reaction 4-hydroxy-3,5-dimethoxyphenethylamine + S-adenosyl-L-methionine = mescaline + S-adenosyl-L-homocysteine + H(+). It carries out the reaction dopamine + S-adenosyl-L-methionine = 4-methoxytyramine + S-adenosyl-L-homocysteine + H(+). It functions in the pathway aromatic compound metabolism. The protein operates within alkaloid biosynthesis. O-methyltransferase participating in the biosynthesis of natural products derived from phenylethylamine, including mescaline, a natural hallucinogen potentially used in psychotherapeutic treatments. Catalyzes the O-methylation of dopamine, 4-hydroxy-3,5-dimethoxyphenethylamine, 4,5-dihydroxy-3-methoxyphenethylamine and N-methyl-4,5-dihydroxy-3-methoxyphenethylamine. Also involved in the conversion of N-methyl-4-hydroxy-3,5-dimethoxyphenethylamine to N-methylmescaline. The chain is O-methyltransferase 12 from Lophophora williamsii (Peyote).